The primary structure comprises 347 residues: tRNA(Ile)-lysidine synthase (347 aa).

Residue 27-32 (SGGADS) coordinates ATP. Residues 243 to 263 (AAPASPSHVEGEASAPHDAAH) are disordered.

Belongs to the tRNA(Ile)-lysidine synthase family.

The protein localises to the cytoplasm. The catalysed reaction is cytidine(34) in tRNA(Ile2) + L-lysine + ATP = lysidine(34) in tRNA(Ile2) + AMP + diphosphate + H(+). In terms of biological role, ligates lysine onto the cytidine present at position 34 of the AUA codon-specific tRNA(Ile) that contains the anticodon CAU, in an ATP-dependent manner. Cytidine is converted to lysidine, thus changing the amino acid specificity of the tRNA from methionine to isoleucine. This is tRNA(Ile)-lysidine synthase from Nitratidesulfovibrio vulgaris (strain ATCC 29579 / DSM 644 / CCUG 34227 / NCIMB 8303 / VKM B-1760 / Hildenborough) (Desulfovibrio vulgaris).